The chain runs to 107 residues: Nucleoid-associated protein BMEA_A0033 (107 aa).

The protein belongs to the YbaB/EbfC family. As to quaternary structure, homodimer.

The protein localises to the cytoplasm. Its subcellular location is the nucleoid. Its function is as follows. Binds to DNA and alters its conformation. May be involved in regulation of gene expression, nucleoid organization and DNA protection. The sequence is that of Nucleoid-associated protein BMEA_A0033 from Brucella melitensis biotype 2 (strain ATCC 23457).